Reading from the N-terminus, the 289-residue chain is Probable aquaporin PIP2-6 (289 aa).

M1 is subject to N-acetylmethionine. Over 1-38 the chain is Cytoplasmic; the sequence is MTKDELTEEESLSGKDYLDPPPVKTFEVRELKKWSFYR. T7 is subject to Phosphothreonine. A Phosphoserine modification is found at S11. A helical transmembrane segment spans residues 39–59; it reads AVIAEFIATLLFLYVTVLTVI. The Extracellular portion of the chain corresponds to 60–80; the sequence is GFKSQTDINAGGGACASVGLL. A helical membrane pass occupies residues 81 to 101; the sequence is GISWAFGGMIFILVYCTAGIS. Residues 102 to 124 lie on the Cytoplasmic side of the membrane; the sequence is GGHINPAVTFGLFLASKVSLVRA. The NPA 1 motif lies at 106 to 108; the sequence is NPA. Residues 125 to 145 traverse the membrane as a helical segment; sequence VSYMVAQCLGATCGVGLVKVF. Over 146 to 165 the chain is Extracellular; the sequence is QSTYYNRYGGGANMLSDGYN. The helical transmembrane segment at 166–186 threads the bilayer; the sequence is VGVGVGAEIIGTFVLVYTVFS. The Cytoplasmic segment spans residues 187-200; it reads ATDPKRNARDSHIP. Residues 201 to 221 traverse the membrane as a helical segment; it reads VLAPLPIGFSVFMVHLATIPI. The Extracellular segment spans residues 222–248; that stretch reads TGTGINPARSFGAAVIYNNQKAWDDQW. The NPA 2 motif lies at 227–229; that stretch reads NPA. The helical transmembrane segment at 249–269 threads the bilayer; that stretch reads IFWVGPFVGAAIAAFYHQFVL. Topologically, residues 270–289 are cytoplasmic; that stretch reads RAGAMKAYGSVRSQLHELHA. Phosphoserine occurs at positions 279 and 282.

Belongs to the MIP/aquaporin (TC 1.A.8) family. PIP (TC 1.A.8.11) subfamily. Expressed above ground, and in flower buds.

The protein localises to the cell membrane. Aquaporins facilitate the transport of water and small neutral solutes across cell membranes. In Arabidopsis thaliana (Mouse-ear cress), this protein is Probable aquaporin PIP2-6 (PIP2-6).